Reading from the N-terminus, the 327-residue chain is 2-keto-3-deoxygluconate permease (327 aa).

The next 10 helical transmembrane spans lie at I10–P30, G42–I62, K73–S93, I95–V115, A139–G159, I163–A183, V199–I219, L224–A244, T254–A274, and S289–W309.

Belongs to the KdgT transporter family.

It is found in the cell inner membrane. It carries out the reaction 2-dehydro-3-deoxy-D-gluconate(in) + H(+)(in) = 2-dehydro-3-deoxy-D-gluconate(out) + H(+)(out). Its function is as follows. Catalyzes the proton-dependent uptake of 2-keto-3-deoxygluconate (KDG) into the cell. This is 2-keto-3-deoxygluconate permease from Escherichia coli O7:K1 (strain IAI39 / ExPEC).